A 1228-amino-acid chain; its full sequence is ABC transporter B family member 16 (1228 aa).

The next 6 membrane-spanning stretches (helical) occupy residues 22–42 (MGLGLIGAVGDGFITPILFFI), 69–89 (LAMLYVACASWVICFLEGYCW), 145–167 (LPNILMNASAFVGSYIVGFMLLW), 171–193 (IVGFPFIILLLIPGLMYGRALIG), 251–271 (GIAIGSNGIVYAIWGFLTWYG), and 283–303 (GTVSTVTVCVTFGGTALGQAL). One can recognise an ABC transmembrane type-1 1 domain in the interval 22-311 (MGLGLIGAVG…ALSNLKYFSE (290 aa)). Residues 346 to 582 (VEFNNVKCKY…DGKYTSLVRL (237 aa)) enclose the ABC transporter 1 domain. 381–388 (GGSGSGKS) provides a ligand contact to ATP. N529, N593, and N628 each carry an N-linked (GlcNAc...) asparagine glycan. One can recognise an ABC transmembrane type-1 2 domain in the interval 658–946 (ALCGCLSASL…AGTMTTDLAK (289 aa)). 2 consecutive transmembrane segments (helical) span residues 667-687 (LGGAVQPIYAYSSGLMISVFF) and 700-720 (IYVLLFFGLALFTFFTSISQQ). Residue N755 is glycosylated (N-linked (GlcNAc...) asparagine). 2 helical membrane-spanning segments follow: residues 781-801 (LLVQTISTVMVACTIGLVIAW) and 805-825 (IVMISVQPVIIVCYYIQRVLL). A glycan (N-linked (GlcNAc...) asparagine) is linked at N827. Helical transmembrane passes span 881 to 901 (SWLAGIMLGTTQSLITCTSAL) and 920 to 940 (FFELFLIFKTTGRAIAEAGTM). An ABC transporter 2 domain is found at 981-1219 (ITFLNVDFAY…GPTGSYFSLV (239 aa)). Residue N1001 is glycosylated (N-linked (GlcNAc...) asparagine). Residue 1016–1023 (GPSRSGKS) participates in ATP binding.

It belongs to the ABC transporter superfamily. ABCB family. Multidrug resistance exporter (TC 3.A.1.201) subfamily.

It localises to the membrane. This Arabidopsis thaliana (Mouse-ear cress) protein is ABC transporter B family member 16 (ABCB16).